The primary structure comprises 806 residues: SH3-containing GRB2-like protein 3-interacting protein 1 (806 aa).

Disordered regions lie at residues 1-115 (MMEG…ESHK) and 142-278 (SIGN…QAAT). 2 stretches are compositionally biased toward basic and acidic residues: residues 16–32 (RKKE…DRDG) and 40–54 (PPYH…EGGK). Residues S78, S104, S105, S107, S149, S151, S156, and S169 each carry the phosphoserine modification. Residues T180 and T182 each carry the phosphothreonine modification. 2 positions are modified to phosphoserine: S236 and F243. The segment covering 245–260 (TGTPPPLPPKTVPATP) has biased composition (pro residues). A phosphothreonine mark is found at T247 and T259. Phosphoserine occurs at positions 265, 274, 287, 289, 300, 316, and 319. Residues 265 to 276 (SPLTVATGNDQA) show a composition bias toward polar residues. Residues 315-324 (FSDASPEHVT) are compositionally biased toward basic and acidic residues. The interval 315–533 (FSDASPEHVT…SRGPSPLTMG (219 aa)) is disordered. Phosphothreonine occurs at positions 324, 328, and 335. Over residues 335–345 (TPPAASDIPAD) the composition is skewed to low complexity. A338 carries the post-translational modification Phosphoserine. The segment covering 346–369 (SPAPAPPGPTGSAGPPGPPGPRHV) has biased composition (pro residues). A Phosphoserine modification is found at S371. Basic and acidic residues predominate over residues 377–392 (EVQKKVAEQTFIKDDY). S398 bears the Phosphoserine mark. T409 carries the phosphothreonine modification. The span at 436–453 (TSGASSPARPATPLVPCS) shows a compositional bias: low complexity. The span at 454 to 473 (TTPPPPPPRPPSRPKLPPGK) shows a compositional bias: pro residues. Low complexity-rich tracts occupy residues 480–490 (SRPFSPPIHSS) and 497–520 (PLAR…TTPT). Phosphoserine occurs at positions 484, 505, and 533. In terms of domain architecture, MHD spans 537–805 (TLPVAAAFTE…RFAAGKYLAD (269 aa)). Interaction with DPF motifs-containing proteins regions lie at residues 539–545 (PVAAAFT), 571–573 (SFP), 645–648 (TYYN), and 791–796 (SLIKKR). The necessary and sufficient to mediate interaction with CANX stretch occupies residues 627-806 (MPNLMTHLKK…FAAGKYLADN (180 aa)).

In terms of assembly, interacts with proteins essential or regulating the formation of functional clathrin-coated pits. Interacts with CANX. Interacts with AP2A1. Interacts with EPS15. Interacts with SH3GL3. Interacts with AMPH. Interacts with ITSN1 (via SH3 domains). Interacts with and REPS1. As to expression, detected in brain, spinal cord and cerebellum.

Its subcellular location is the membrane. The protein resides in the clathrin-coated pit. Functionally, may function in clathrin-mediated endocytosis. Has both a membrane binding/tubulating activity and the ability to recruit proteins essential to the formation of functional clathrin-coated pits. Has a preference for membranes enriched in phosphatidylserine and phosphoinositides and is required for the endocytosis of the transferrin receptor. May also bind tubulin. May play a role in the regulation of energy homeostasis. This chain is SH3-containing GRB2-like protein 3-interacting protein 1 (Sgip1), found in Mus musculus (Mouse).